We begin with the raw amino-acid sequence, 289 residues long: Inorganic pyrophosphatase (289 aa).

S2 bears the N-acetylserine mark. K57 bears the N6-acetyllysine mark. 3 residues coordinate Mg(2+): D116, D121, and D153. N6-acetyllysine is present on K228. S250 bears the Phosphoserine mark.

Belongs to the PPase family. As to quaternary structure, homodimer. The cofactor is Mg(2+).

It localises to the cytoplasm. The enzyme catalyses diphosphate + H2O = 2 phosphate + H(+). This Macaca fascicularis (Crab-eating macaque) protein is Inorganic pyrophosphatase (PPA1).